We begin with the raw amino-acid sequence, 94 residues long: Pyrimidine/purine nucleoside phosphorylase 2 (94 aa).

The protein belongs to the nucleoside phosphorylase PpnP family.

The enzyme catalyses a purine D-ribonucleoside + phosphate = a purine nucleobase + alpha-D-ribose 1-phosphate. It carries out the reaction adenosine + phosphate = alpha-D-ribose 1-phosphate + adenine. The catalysed reaction is cytidine + phosphate = cytosine + alpha-D-ribose 1-phosphate. It catalyses the reaction guanosine + phosphate = alpha-D-ribose 1-phosphate + guanine. The enzyme catalyses inosine + phosphate = alpha-D-ribose 1-phosphate + hypoxanthine. It carries out the reaction thymidine + phosphate = 2-deoxy-alpha-D-ribose 1-phosphate + thymine. The catalysed reaction is uridine + phosphate = alpha-D-ribose 1-phosphate + uracil. It catalyses the reaction xanthosine + phosphate = alpha-D-ribose 1-phosphate + xanthine. Its function is as follows. Catalyzes the phosphorolysis of diverse nucleosides, yielding D-ribose 1-phosphate and the respective free bases. Can use uridine, adenosine, guanosine, cytidine, thymidine, inosine and xanthosine as substrates. Also catalyzes the reverse reactions. This Psychrobacter arcticus (strain DSM 17307 / VKM B-2377 / 273-4) protein is Pyrimidine/purine nucleoside phosphorylase 2.